Reading from the N-terminus, the 36-residue chain is Photosystem II reaction center protein M (36 aa).

A helical membrane pass occupies residues 5–25; it reads ILAFIATALFILVPTAFLLII.

It belongs to the PsbM family. As to quaternary structure, PSII is composed of 1 copy each of membrane proteins PsbA, PsbB, PsbC, PsbD, PsbE, PsbF, PsbH, PsbI, PsbJ, PsbK, PsbL, PsbM, PsbT, PsbX, PsbY, PsbZ, Psb30/Ycf12, at least 3 peripheral proteins of the oxygen-evolving complex and a large number of cofactors. It forms dimeric complexes.

It is found in the plastid. The protein localises to the chloroplast thylakoid membrane. In terms of biological role, one of the components of the core complex of photosystem II (PSII). PSII is a light-driven water:plastoquinone oxidoreductase that uses light energy to abstract electrons from H(2)O, generating O(2) and a proton gradient subsequently used for ATP formation. It consists of a core antenna complex that captures photons, and an electron transfer chain that converts photonic excitation into a charge separation. This subunit is found at the monomer-monomer interface. This chain is Photosystem II reaction center protein M, found in Panax ginseng (Korean ginseng).